The sequence spans 72 residues: ATP synthase subunit c (72 aa).

2 helical membrane passes run 1 to 21 and 48 to 68; these read MSLGVLAAAIAVGLGALGAGI and MFIGVALVEALPIIGVVFSFI.

This sequence belongs to the ATPase C chain family. In terms of assembly, F-type ATPases have 2 components, F(1) - the catalytic core - and F(0) - the membrane proton channel. F(1) has five subunits: alpha(3), beta(3), gamma(1), delta(1), epsilon(1). F(0) has three main subunits: a(1), b(2) and c(10-14). The alpha and beta chains form an alternating ring which encloses part of the gamma chain. F(1) is attached to F(0) by a central stalk formed by the gamma and epsilon chains, while a peripheral stalk is formed by the delta and b chains.

It is found in the cell membrane. F(1)F(0) ATP synthase produces ATP from ADP in the presence of a proton or sodium gradient. F-type ATPases consist of two structural domains, F(1) containing the extramembraneous catalytic core and F(0) containing the membrane proton channel, linked together by a central stalk and a peripheral stalk. During catalysis, ATP synthesis in the catalytic domain of F(1) is coupled via a rotary mechanism of the central stalk subunits to proton translocation. Its function is as follows. Key component of the F(0) channel; it plays a direct role in translocation across the membrane. A homomeric c-ring of between 10-14 subunits forms the central stalk rotor element with the F(1) delta and epsilon subunits. In Geobacillus stearothermophilus (Bacillus stearothermophilus), this protein is ATP synthase subunit c.